The sequence spans 469 residues: Adenosylhomocysteinase (469 aa).

Substrate contacts are provided by threonine 63, aspartate 139, and glutamate 164. 165 to 167 provides a ligand contact to NAD(+); sequence TTT. The substrate site is built by lysine 194 and aspartate 198. NAD(+) contacts are provided by residues asparagine 199, 228-233, glutamate 251, asparagine 300, 321-323, and asparagine 375; these read GYGDVG and IGH.

It belongs to the adenosylhomocysteinase family. NAD(+) is required as a cofactor.

It is found in the cytoplasm. It carries out the reaction S-adenosyl-L-homocysteine + H2O = L-homocysteine + adenosine. Its pathway is amino-acid biosynthesis; L-homocysteine biosynthesis; L-homocysteine from S-adenosyl-L-homocysteine: step 1/1. Functionally, may play a key role in the regulation of the intracellular concentration of adenosylhomocysteine. The polypeptide is Adenosylhomocysteinase (Ectopseudomonas mendocina (strain ymp) (Pseudomonas mendocina)).